A 676-amino-acid chain; its full sequence is RNA helicase NPH-II (676 aa).

A Helicase ATP-binding domain is found at 172 to 347; the sequence is FSAWISHRPV…VFLPNPAFIH (176 aa). 185–192 is a binding site for ATP; that stretch reads GGTGVGKT. The short motif at 296–299 is the DEXH box element; that stretch reads DEVH. The 170-residue stretch at 366 to 535 folds into the Helicase C-terminal domain; that stretch reads NPSSRMAYIE…NYILYANKFN (170 aa).

The protein belongs to the DEAD box helicase family. DEAH subfamily. In terms of assembly, monomer.

The protein resides in the virion. The enzyme catalyses ATP + H2O = ADP + phosphate + H(+). Its function is as follows. NTP-dependent helicase that catalyzes unidirectional unwinding of 3'tailed duplex RNAs and plays an important role during transcription of early mRNAs, presumably by preventing R-loop formation behind the elongating RNA polymerase. Might also play a role in the export of newly synthesized mRNA chains out of the core into the cytoplasm. Required for replication and propagation of viral particles. The polypeptide is RNA helicase NPH-II (OPG084) (Vaccinia virus (strain Copenhagen) (VACV)).